The sequence spans 176 residues: MSRVGKSPIALQGAEVKLADGVITVKGPLGTITQAVNPLVKVANNDGTLNLAPADESREANALSGTMRAIIANAVHGVTKGFERKLTLVGVGYRAQAQGDKLNLSLGFSHPVVHQMPEGVKAETPTQTEIVIKGIDKQKVGQVAAEVRGYRPPEPYKGKGVRYADEVVILKETKKK.

Belongs to the universal ribosomal protein uL6 family. As to quaternary structure, part of the 50S ribosomal subunit.

This protein binds to the 23S rRNA, and is important in its secondary structure. It is located near the subunit interface in the base of the L7/L12 stalk, and near the tRNA binding site of the peptidyltransferase center. In Burkholderia multivorans (strain ATCC 17616 / 249), this protein is Large ribosomal subunit protein uL6.